Here is a 154-residue protein sequence, read N- to C-terminus: AP-1 complex subunit sigma-2 (154 aa).

This sequence belongs to the adaptor complexes small subunit family. As to quaternary structure, adaptor protein complex 1 (AP-1) is a heterotetramer composed of two large adaptins (gamma-type subunit and beta-type subunit), a medium adaptin (mu-type subunit) and a small adaptin (sigma-type subunit).

It is found in the golgi apparatus. Its subcellular location is the trans-Golgi network. It localises to the cytoplasmic vesicle. The protein resides in the clathrin-coated vesicle membrane. Functionally, subunit of clathrin-associated adaptor protein complex 1 that plays a role in protein sorting in the trans-Golgi network (TGN) and endosomes. The AP complexes mediate the recruitment of clathrin to membranes and the recognition of sorting signals within the cytosolic tails of transmembrane cargo molecules. Also involved in early steps of phagocytosis and macropinocytosis. The chain is AP-1 complex subunit sigma-2 (ap1s2) from Dictyostelium discoideum (Social amoeba).